A 1150-amino-acid chain; its full sequence is ATP-dependent helicase/deoxyribonuclease subunit B (1150 aa).

Residue 8-15 (GRAGSGKS) participates in ATP binding. Residues C786, C1106, C1109, and C1115 each contribute to the [4Fe-4S] cluster site.

This sequence belongs to the helicase family. AddB/RexB type 1 subfamily. Heterodimer of AddA and AddB. Requires Mg(2+) as cofactor. [4Fe-4S] cluster is required as a cofactor.

In terms of biological role, the heterodimer acts as both an ATP-dependent DNA helicase and an ATP-dependent, dual-direction single-stranded exonuclease. Recognizes the chi site generating a DNA molecule suitable for the initiation of homologous recombination. The AddB subunit has 5' -&gt; 3' nuclease activity but not helicase activity. The chain is ATP-dependent helicase/deoxyribonuclease subunit B from Clostridium botulinum (strain Hall / ATCC 3502 / NCTC 13319 / Type A).